A 354-amino-acid polypeptide reads, in one-letter code: ORC1-type DNA replication protein 9 (354 aa).

ATP is bound by residues 63–67 (TGKTC), Tyr195, and Arg207.

This sequence belongs to the CDC6/cdc18 family.

Involved in regulation of DNA replication. The protein is ORC1-type DNA replication protein 9 (orc9-1) of Halobacterium salinarum (strain ATCC 700922 / JCM 11081 / NRC-1) (Halobacterium halobium).